A 303-amino-acid polypeptide reads, in one-letter code: Probable 5-dehydro-4-deoxyglucarate dehydratase (303 aa).

Belongs to the DapA family.

It carries out the reaction 5-dehydro-4-deoxy-D-glucarate + H(+) = 2,5-dioxopentanoate + CO2 + H2O. Its pathway is carbohydrate acid metabolism; D-glucarate degradation; 2,5-dioxopentanoate from D-glucarate: step 2/2. The polypeptide is Probable 5-dehydro-4-deoxyglucarate dehydratase (Paracidovorax citrulli (strain AAC00-1) (Acidovorax citrulli)).